A 493-amino-acid polypeptide reads, in one-letter code: MKATKETLSPTRVKLTVEVPFDELKPSLDATYRKLARQVRVSGFRPGKVPPRILDQRLGRGVILDEAVQEALPQLYSEAVQAEEVDVLSRPEVDITEFADGGQLVFTAEVDVRPEVALPEFADLSVTVDAVEVTDEQVEEQLGALRDRFAQLQPVERAVQTGDFVSLDLSAQADGKPIEGAEATGLSYEVGSGNLIEGLDEAIVGAADGESRTFTTELLAGDQAGQQAEVTATVRGVKEKELPALDDDFATTASEFDTLDDLRGDVRSRLEQSRRTEQVGQAREKLLESLLERVDVPVPDSLLAGEIEAREHRLSHELENIGTDRATYLETLGQTAEEFDAEVRETAGKAIRSQFILDAVIDAESIGIDQGELMEQVIYRAQRSGLQPDVYAQQLAQGEGLQALMADVLRTKALFLLLENAKVVDGEGNPVELALPARPAPDADEDDDHAGHDHEGHDHADHAGHDHAGDDAAAEPAEAPAATAAVDSGDRDI.

In terms of domain architecture, PPIase FKBP-type spans 162 to 243 (GDFVSLDLSA…VRGVKEKELP (82 aa)). Residues 432–493 (ELALPARPAP…AAVDSGDRDI (62 aa)) form a disordered region. Basic and acidic residues predominate over residues 449–470 (HAGHDHEGHDHADHAGHDHAGD). The segment covering 474–485 (AEPAEAPAATAA) has biased composition (low complexity).

Belongs to the FKBP-type PPIase family. Tig subfamily.

Its subcellular location is the cytoplasm. It catalyses the reaction [protein]-peptidylproline (omega=180) = [protein]-peptidylproline (omega=0). Its function is as follows. Involved in protein export. Acts as a chaperone by maintaining the newly synthesized protein in an open conformation. Functions as a peptidyl-prolyl cis-trans isomerase. This Frankia alni (strain DSM 45986 / CECT 9034 / ACN14a) protein is Trigger factor.